A 610-amino-acid chain; its full sequence is Dihydroxy-acid dehydratase (610 aa).

Asp-81 provides a ligand contact to Mg(2+). Cys-122 lines the [2Fe-2S] cluster pocket. Residues Asp-123 and Lys-124 each contribute to the Mg(2+) site. The residue at position 124 (Lys-124) is an N6-carboxylysine. Cys-193 contacts [2Fe-2S] cluster. Glu-489 provides a ligand contact to Mg(2+). Ser-515 acts as the Proton acceptor in catalysis.

Belongs to the IlvD/Edd family. In terms of assembly, homodimer. Requires [2Fe-2S] cluster as cofactor. The cofactor is Mg(2+).

The catalysed reaction is (2R)-2,3-dihydroxy-3-methylbutanoate = 3-methyl-2-oxobutanoate + H2O. It catalyses the reaction (2R,3R)-2,3-dihydroxy-3-methylpentanoate = (S)-3-methyl-2-oxopentanoate + H2O. It participates in amino-acid biosynthesis; L-isoleucine biosynthesis; L-isoleucine from 2-oxobutanoate: step 3/4. It functions in the pathway amino-acid biosynthesis; L-valine biosynthesis; L-valine from pyruvate: step 3/4. Functionally, functions in the biosynthesis of branched-chain amino acids. Catalyzes the dehydration of (2R,3R)-2,3-dihydroxy-3-methylpentanoate (2,3-dihydroxy-3-methylvalerate) into 2-oxo-3-methylpentanoate (2-oxo-3-methylvalerate) and of (2R)-2,3-dihydroxy-3-methylbutanoate (2,3-dihydroxyisovalerate) into 2-oxo-3-methylbutanoate (2-oxoisovalerate), the penultimate precursor to L-isoleucine and L-valine, respectively. The sequence is that of Dihydroxy-acid dehydratase from Xylella fastidiosa (strain M23).